The following is a 241-amino-acid chain: Small ribosomal subunit protein uS2 (241 aa).

The protein belongs to the universal ribosomal protein uS2 family.

The protein is Small ribosomal subunit protein uS2 of Shigella flexneri serotype 5b (strain 8401).